A 181-amino-acid chain; its full sequence is uncharacterized protein (181 aa).

Gly residues-rich tracts occupy residues 143 to 156 (RRGG…GPRG) and 170 to 181 (GPFGPGYRGPRF). Residues 143 to 181 (RRGGRYGDFGGPRGPRGPRNDGPFGPFGPFGPGYRGPRF) form a disordered region.

As to quaternary structure, has been detected in a cytochrome bc1-aa3 supercomplex; its deletion however leaves complex activity unaffected.

This is an uncharacterized protein from Corynebacterium glutamicum (strain ATCC 13032 / DSM 20300 / JCM 1318 / BCRC 11384 / CCUG 27702 / LMG 3730 / NBRC 12168 / NCIMB 10025 / NRRL B-2784 / 534).